We begin with the raw amino-acid sequence, 305 residues long: MELIFLGTSAGVPTRTRNVTAILLNLQHPTQSGLWLFDCGEGTQHQLLHTAFNPGKLDKIFISHLHGDHLFGLPGLLCSRSMSGIIQPLTIYGPHGIREFVETALRISGSWTDYPLEIVEIGAGEIFDDGLRKVTAYPMEHPLECYGYRIEEHDKPGALNAQALKAAGVPPGPLFQELKAGKTIMLDDGRQINGADYLAAPVPGKALAIFGDTGPCDAALELAKGVDVMVHEATLDMAMEAKANSRGHSSTRQAAALAREAGVGKLIITHVSSRYDDKGCQHLLRECRSIFPATELANDFAVFSI.

Residues histidine 64, histidine 66, aspartate 68, histidine 69, histidine 141, aspartate 212, and histidine 270 each contribute to the Zn(2+) site. Aspartate 68 functions as the Proton acceptor in the catalytic mechanism.

It belongs to the RNase Z family. RNase BN subfamily. Homodimer. Zn(2+) is required as a cofactor.

Its function is as follows. Zinc phosphodiesterase, which has both exoribonuclease and endoribonuclease activities. This Escherichia coli O81 (strain ED1a) protein is Ribonuclease BN.